The following is a 248-amino-acid chain: MKVTLVGNGRMGQQVAEVISRSNDHEIAAVLDVDARITPEIFHGSDVIIDFTVRQAFMDNLPAMLASGVPVVVGTTGWDDAMEEVRRMVADARASLMYSANFSLGVNIFLRTLREAARLIAPFGQFDIALEEQHHTGKADFPSGTALRAAELVLEANGRKRTIVRQLSDNRKLAAEELQVASVRLGSVFGKHTAFIDSDADEILVAHTAKSRAGFAGGAVHAAEWLAGMHCEKPGFYTMDDFLNERLS.

NAD(+)-binding positions include 74–76 (GTT) and 99–102 (SANF). Catalysis depends on His134, which acts as the Proton donor/acceptor. (S)-2,3,4,5-tetrahydrodipicolinate is bound at residue His135. Residue Lys138 is the Proton donor of the active site. A (S)-2,3,4,5-tetrahydrodipicolinate-binding site is contributed by 144–145 (GT).

This sequence belongs to the DapB family.

It localises to the cytoplasm. It carries out the reaction (S)-2,3,4,5-tetrahydrodipicolinate + NAD(+) + H2O = (2S,4S)-4-hydroxy-2,3,4,5-tetrahydrodipicolinate + NADH + H(+). The catalysed reaction is (S)-2,3,4,5-tetrahydrodipicolinate + NADP(+) + H2O = (2S,4S)-4-hydroxy-2,3,4,5-tetrahydrodipicolinate + NADPH + H(+). It functions in the pathway amino-acid biosynthesis; L-lysine biosynthesis via DAP pathway; (S)-tetrahydrodipicolinate from L-aspartate: step 4/4. Its function is as follows. Catalyzes the conversion of 4-hydroxy-tetrahydrodipicolinate (HTPA) to tetrahydrodipicolinate. This is 4-hydroxy-tetrahydrodipicolinate reductase from Chlorobium phaeobacteroides (strain DSM 266 / SMG 266 / 2430).